The sequence spans 207 residues: Alpha-1-acid glycoprotein 1 (207 aa).

Residues 1 to 18 (MALHMILVMLSLLPLLEA) form the signal peptide. Glutamine 19 carries the pyrrolidone carboxylic acid modification. N-linked (GlcNAc...) asparagine glycans are attached at residues asparagine 25, asparagine 34, asparagine 76, asparagine 94, and asparagine 104. An intrachain disulfide couples cysteine 91 to cysteine 184.

Belongs to the calycin superfamily. Lipocalin family. Expressed by the liver and secreted in plasma.

The protein localises to the secreted. Functions as a transport protein in the blood stream. Binds various ligands in the interior of its beta-barrel domain. Appears to function in modulating the activity of the immune system during the acute-phase reaction. This Mus caroli (Ryukyu mouse) protein is Alpha-1-acid glycoprotein 1 (Orm1).